We begin with the raw amino-acid sequence, 173 residues long: Shikimate kinase (173 aa).

14 to 19 serves as a coordination point for ATP; it reads GAGKST. Ser-18 contacts Mg(2+). 3 residues coordinate substrate: Asp-36, Arg-60, and Gly-82. Arg-120 contacts ATP. Arg-140 serves as a coordination point for substrate. Residue Gln-157 coordinates ATP.

Belongs to the shikimate kinase family. Monomer. Mg(2+) serves as cofactor.

It localises to the cytoplasm. The catalysed reaction is shikimate + ATP = 3-phosphoshikimate + ADP + H(+). Its pathway is metabolic intermediate biosynthesis; chorismate biosynthesis; chorismate from D-erythrose 4-phosphate and phosphoenolpyruvate: step 5/7. In terms of biological role, catalyzes the specific phosphorylation of the 3-hydroxyl group of shikimic acid using ATP as a cosubstrate. In Baumannia cicadellinicola subsp. Homalodisca coagulata, this protein is Shikimate kinase.